The sequence spans 648 residues: Sodium/nucleoside cotransporter 1 (648 aa).

At 1 to 80 the chain is on the cytoplasmic side; that stretch reads MADNTQRQRE…ARSFCREHRQ (80 aa). A helical transmembrane segment spans residues 81-104; the sequence is LFGWICKGLLSTACLGFLMVACLL. The Extracellular segment spans residues 105 to 109; sequence DLQRA. A helical membrane pass occupies residues 110-128; sequence LALLIITCVVLVFLAYDLL. Topologically, residues 129 to 147 are cytoplasmic; it reads KRLLGSKLRRCVKFQGHSC. The chain crosses the membrane as a helical span at residues 148 to 167; sequence LSLWLKRGLALAAGVGLILW. The Extracellular portion of the chain corresponds to 168–178; it reads LSLDTAQRPEQ. The helical transmembrane segment at 179–195 threads the bilayer; that stretch reads LVSFAGICVFLVLLFAG. Residues 196 to 201 lie on the Cytoplasmic side of the membrane; the sequence is SKHHRA. Residues 202–222 traverse the membrane as a helical segment; sequence VSWRAVSWGLGLQFVLGLFVI. Residues 223–261 are Extracellular-facing; it reads RTEPGFIAFQWLGDQIQVFLSYTEAGSSFVFGEALVKDV. The helical transmembrane segment at 262 to 283 threads the bilayer; the sequence is FAFQVLPIIIFFSCVMSVLYYL. Residues 284-294 are Cytoplasmic-facing; that stretch reads GLMQWVILKIA. Residues 295–318 traverse the membrane as a helical segment; that stretch reads WLMQVTMGTSATETLSVAGNIFVS. At 319-337 the chain is on the extracellular side; sequence QTEAPLLIRPYLADMTLSE. A helical transmembrane segment spans residues 338-360; the sequence is VHVVMTGGYATIAGSLLGAYISF. Topologically, residues 361 to 366 are cytoplasmic; the sequence is GIDAAS. The helical transmembrane segment at 367 to 386 threads the bilayer; sequence LIAASVMAAPCALALSKLVY. At 387–423 the chain is on the extracellular side; the sequence is PEVEESKFRSENGVKLTYGDAQNLLEAASAGAAISVK. A helical transmembrane segment spans residues 424–446; sequence VVANIAANLIAFLAVLAFVNAAL. The Cytoplasmic portion of the chain corresponds to 447–457; the sequence is SWLGDMVDIQG. A helical membrane pass occupies residues 458–479; that stretch reads LSFQLICSYVLRPVAFLMGVAW. Residues 480–534 lie on the Extracellular side of the membrane; the sequence is EDCPVVAELLGIKFFLNEFVAYQELSQYKQRRLAGAEEWLGDKKQWISVRAEILT. A helical membrane pass occupies residues 535–558; sequence TYALCGFANFSSIGIMLGGLTSLV. At 559–569 the chain is on the cytoplasmic side; it reads PQRRSDFSQIV. The chain crosses the membrane as a helical span at residues 570 to 592; it reads LRALITGAFVSLLNACVAGILYV. At 593-648 the chain is on the extracellular side; sequence PRGVEVDCVSLLNQTVSSSSFEVYLCCRQVFQSTSSEFSQVALDNCCRFYNHTVCT. N-linked (GlcNAc...) asparagine glycans are attached at residues Asn605 and Asn643.

Belongs to the concentrative nucleoside transporter (CNT) (TC 2.A.41) family. In terms of processing, N-glycosylated. N-glycosylation is required for localization to the plasma membrane and the transporter activity. As to expression, expressed predominantly in the brush-border membranes of the polarized epithelial cells of jejunum and renal cortical tubules and in the bile canalicular membranes of liver parenchymal cells.

It is found in the cell membrane. The protein resides in the apical cell membrane. The catalysed reaction is uridine(out) + Na(+)(out) = uridine(in) + Na(+)(in). It catalyses the reaction thymidine(out) + Na(+)(out) = thymidine(in) + Na(+)(in). It carries out the reaction cytidine(out) + Na(+)(out) = cytidine(in) + Na(+)(in). The enzyme catalyses adenosine(out) + Na(+)(out) = adenosine(in) + Na(+)(in). Its activity is regulated as follows. Due to its high apparent affinity but slow transport, adenosine could act as a negative regulator of pyrimidine transport under some conditions. In terms of biological role, sodium and pyrimidine nucleoside symporter of the plasma membrane that imports uridine, thymidine and cytidine into cells by coupling their transport to the transmembrane sodium electrochemical gradient. Also transports adenosine, an atypical substrate transported with high apparent affinity, but low maximum velocity. Therefore, exhibits the transport characteristics of the nucleoside transport system cit or N2 subtype (N2/cit). Involved in renal nucleoside (re)absorption. This is Sodium/nucleoside cotransporter 1 from Rattus norvegicus (Rat).